The sequence spans 447 residues: Putative branched-chain amino acid carrier protein SAB1263c (447 aa).

Helical transmembrane passes span 6–26, 40–60, 74–94, 114–134, 143–163, 193–213, 229–249, 290–310, 326–346, 350–370, 382–402, and 417–437; these read WVIGFTLFAMFFGAGNLIFPP, ILAFVLTGIDLPLLGVIVGAL, PKFSILFLIIIYLTIGPLFAI, SSIALFIFTIIYFIVVLYICL, IGSLLTPLLLITILAMIIKGY, GYLTMDAIAAIAFSMIVVNAV, LTAGLIAAVALIFIYISLGYI, LLGIIVALACLTTACGLIGAV, FVLVFILMSFIIANQGLNAVI, IPVLSIVYPVAITVVLLILIA, IPVIIVFILSIFSVISKLGWL, and LEWFPVAIIATILGYLVGIFV.

The protein belongs to the branched chain amino acid transporter family.

The protein localises to the cell membrane. Component of the transport system for branched-chain amino acids (leucine, isoleucine and valine), which is coupled to a proton motive force (Potential). Contributes to NaCl tolerance. In Staphylococcus aureus (strain bovine RF122 / ET3-1), this protein is Putative branched-chain amino acid carrier protein SAB1263c.